Consider the following 916-residue polypeptide: Protein translocase subunit SecA (916 aa).

ATP-binding positions include Gln-87, 105 to 109 (GEGKT), and Asp-507. Residues Cys-900, Cys-902, Cys-911, and His-912 each coordinate Zn(2+).

It belongs to the SecA family. Monomer and homodimer. Part of the essential Sec protein translocation apparatus which comprises SecA, SecYEG and auxiliary proteins SecDF-YajC and YidC. It depends on Zn(2+) as a cofactor.

The protein resides in the cell inner membrane. The protein localises to the cytoplasm. It catalyses the reaction ATP + H2O + cellular proteinSide 1 = ADP + phosphate + cellular proteinSide 2.. In terms of biological role, part of the Sec protein translocase complex. Interacts with the SecYEG preprotein conducting channel. Has a central role in coupling the hydrolysis of ATP to the transfer of proteins into and across the cell membrane, serving both as a receptor for the preprotein-SecB complex and as an ATP-driven molecular motor driving the stepwise translocation of polypeptide chains across the membrane. The sequence is that of Protein translocase subunit SecA from Neisseria meningitidis serogroup C / serotype 2a (strain ATCC 700532 / DSM 15464 / FAM18).